A 198-amino-acid chain; its full sequence is NAD(P)H dehydrogenase (quinone) (198 aa).

In terms of domain architecture, Flavodoxin-like spans isoleucine 4–valine 190. Residues serine 10–isoleucine 15 and threonine 79–phenylalanine 81 contribute to the FMN site. Tyrosine 12 is an NAD(+) binding site. Substrate is bound at residue tryptophan 99. Residues serine 114–glycine 119 and histidine 134 contribute to the FMN site.

This sequence belongs to the WrbA family. It depends on FMN as a cofactor.

It catalyses the reaction a quinone + NADH + H(+) = a quinol + NAD(+). The catalysed reaction is a quinone + NADPH + H(+) = a quinol + NADP(+). In Azotobacter vinelandii (strain DJ / ATCC BAA-1303), this protein is NAD(P)H dehydrogenase (quinone).